The following is a 500-amino-acid chain: MAFLLTTRRLVCSSQKNLHLFTPGSRYISQAAAKVDFEFDYDGPLMKTEVPGPRSQELMKQLNTIQNAEAVHFFCNYEESRGNYLVDVDGNRMLDLYSQISSVPIGYNHPALAKLVQQPQNASTFINRPALGILPPENFVDKLRESLMSVAPKGMCQLITMACGSCSNENAFKTIFMWYRSKERGQRGFSKEELETCMVNQSPGCPDYSILSFMGAFHGRTMGCLATTHSKAIHKIDIPSFDWPIAPFPRLKYPLEEFVTDNQQEEARCLEEVEDLIVKYRKKKRTVAGIIVEPIQSEGGDNHASDDFFRKLRDIARKHGCAFLVDEVQTGGGCTGKFWAHEHWGLDDPADVMSFSKKMMTGGFFHKEEFRPSAPYRIFNTWLGDPSKNLLLAEVINIIKREDLLNNVAHAGKTLLTGLLDLQAQYPQFVSRVRGRGTFCSFDTPDEAIRNKLILIARNKGVVLGGCGDKSIRFRPTLVFRDHHAHLFLNIFSGILADFK.

Residues 1 to 27 (MAFLLTTRRLVCSSQKNLHLFTPGSRY) constitute a mitochondrion transit peptide. Cysteine 163 contacts [2Fe-2S] cluster. Residue 164–165 (GS) coordinates pyridoxal 5'-phosphate. Cysteine 166 lines the [2Fe-2S] cluster pocket. A substrate-binding site is contributed by arginine 220. Lysine 231 carries the N6-succinyllysine modification. Lysine 252 is modified (N6-acetyllysine; alternate). Lysine 252 carries the N6-succinyllysine; alternate modification. N6-acetyllysine is present on residues lysine 279 and lysine 318. Lysine 357 is modified (N6-(pyridoxal phosphate)lysine). Threonine 381 serves as a coordination point for pyridoxal 5'-phosphate. Position 413 is an N6-acetyllysine; alternate (lysine 413). Lysine 413 carries the post-translational modification N6-succinyllysine; alternate. N6-acetyllysine occurs at positions 452 and 470.

This sequence belongs to the class-III pyridoxal-phosphate-dependent aminotransferase family. In terms of assembly, homodimer; disulfide-linked. It depends on pyridoxal 5'-phosphate as a cofactor. The cofactor is [2Fe-2S] cluster.

It is found in the mitochondrion matrix. The catalysed reaction is 4-aminobutanoate + 2-oxoglutarate = succinate semialdehyde + L-glutamate. The enzyme catalyses (S)-3-amino-2-methylpropanoate + 2-oxoglutarate = 2-methyl-3-oxopropanoate + L-glutamate. Its function is as follows. Catalyzes the conversion of gamma-aminobutyrate and L-beta-aminoisobutyrate to succinate semialdehyde and methylmalonate semialdehyde, respectively. Can also convert delta-aminovalerate and beta-alanine. This is 4-aminobutyrate aminotransferase, mitochondrial from Rattus norvegicus (Rat).